We begin with the raw amino-acid sequence, 342 residues long: Anthranilate phosphoribosyltransferase (342 aa).

5-phospho-alpha-D-ribose 1-diphosphate-binding positions include glycine 90, 93-94 (GD), threonine 98, 100-103 (NIST), 118-126 (KHGNRSVSS), and alanine 130. Glycine 90 is an anthranilate binding site. Residue serine 102 coordinates Mg(2+). Residue asparagine 121 coordinates anthranilate. An anthranilate-binding site is contributed by arginine 176. The Mg(2+) site is built by aspartate 234 and glutamate 235.

This sequence belongs to the anthranilate phosphoribosyltransferase family. As to quaternary structure, homodimer. Mg(2+) is required as a cofactor.

The catalysed reaction is N-(5-phospho-beta-D-ribosyl)anthranilate + diphosphate = 5-phospho-alpha-D-ribose 1-diphosphate + anthranilate. It participates in amino-acid biosynthesis; L-tryptophan biosynthesis; L-tryptophan from chorismate: step 2/5. In terms of biological role, catalyzes the transfer of the phosphoribosyl group of 5-phosphorylribose-1-pyrophosphate (PRPP) to anthranilate to yield N-(5'-phosphoribosyl)-anthranilate (PRA). The polypeptide is Anthranilate phosphoribosyltransferase (Mannheimia succiniciproducens (strain KCTC 0769BP / MBEL55E)).